Here is a 124-residue protein sequence, read N- to C-terminus: Small ribosomal subunit protein uS12 (124 aa).

The segment at 1-28 is disordered; the sequence is MPTINQLVRKGRTPKVSKTKAPALKGSP. The segment covering 9-18 has biased composition (basic residues); sequence RKGRTPKVSK. D89 is modified (3-methylthioaspartic acid).

This sequence belongs to the universal ribosomal protein uS12 family. Part of the 30S ribosomal subunit. Contacts proteins S8 and S17. May interact with IF1 in the 30S initiation complex.

In terms of biological role, with S4 and S5 plays an important role in translational accuracy. Functionally, interacts with and stabilizes bases of the 16S rRNA that are involved in tRNA selection in the A site and with the mRNA backbone. Located at the interface of the 30S and 50S subunits, it traverses the body of the 30S subunit contacting proteins on the other side and probably holding the rRNA structure together. The combined cluster of proteins S8, S12 and S17 appears to hold together the shoulder and platform of the 30S subunit. In Paenarthrobacter aurescens (strain TC1), this protein is Small ribosomal subunit protein uS12.